Here is a 397-residue protein sequence, read N- to C-terminus: Probable transport protein MmpL6 (397 aa).

5 helical membrane passes run 190-210, 214-234, 242-262, 293-313, and 328-348; these read YDLL…MMII, LVAA…SFGL, LLGI…LLAV, TGGV…SFVF, and LGLL…IAVL.

Belongs to the resistance-nodulation-cell division (RND) (TC 2.A.6) family. MmpL subfamily.

It localises to the cell membrane. The polypeptide is Probable transport protein MmpL6 (mmpL6) (Mycobacterium tuberculosis (strain CDC 1551 / Oshkosh)).